The chain runs to 200 residues: LexA repressor (200 aa).

The segment at residues 27–47 (VREICNAVELRSTSTVHGHLK) is a DNA-binding region (H-T-H motif). Residues Ser124 and Lys161 each act as for autocatalytic cleavage activity in the active site.

Belongs to the peptidase S24 family. In terms of assembly, homodimer.

The catalysed reaction is Hydrolysis of Ala-|-Gly bond in repressor LexA.. In terms of biological role, represses a number of genes involved in the response to DNA damage (SOS response), including recA and lexA. In the presence of single-stranded DNA, RecA interacts with LexA causing an autocatalytic cleavage which disrupts the DNA-binding part of LexA, leading to derepression of the SOS regulon and eventually DNA repair. The polypeptide is LexA repressor (Clostridium tetani (strain Massachusetts / E88)).